A 37-amino-acid chain; its full sequence is Large ribosomal subunit protein bL36 (37 aa).

It belongs to the bacterial ribosomal protein bL36 family.

In Histophilus somni (strain 129Pt) (Haemophilus somnus), this protein is Large ribosomal subunit protein bL36.